Here is an 828-residue protein sequence, read N- to C-terminus: Cadherin-22 (828 aa).

An N-terminal signal peptide occupies residues 1-34 (MRPRPEGRGLRAGVALSPALLLLLLLPPPPTLLG). Residues 36 to 624 (LWAAGTPSPS…AFVMAASLSP (589 aa)) lie on the Extracellular side of the membrane. Cadherin domains follow at residues 64-168 (WVWN…EPRF), 169-277 (LHGP…PPRF), 278-394 (PQKM…PPEF), 395-498 (RPPS…NPPE), and 499-616 (LATP…TTAF). N162 carries an N-linked (GlcNAc...) asparagine glycan. N466 and N612 each carry an N-linked (GlcNAc...) asparagine glycan. Residues 625–645 (GALIALLVCVLILVVLVLLIL) traverse the membrane as a helical segment. Topologically, residues 646 to 828 (TLRRHHKSHL…HRGDDEAQAS (183 aa)) are cytoplasmic. Over residues 702–719 (GGGSAGGGAGGGSGGGAG) the composition is skewed to gly residues. Positions 702 to 745 (GGGSAGGGAGGGSGGGAGSPPQAHLPSERHSLPQGPPSPEPDFS) are disordered.

Its subcellular location is the cell membrane. In terms of biological role, cadherins are calcium-dependent cell adhesion proteins. They preferentially interact with themselves in a homophilic manner in connecting cells; cadherins may thus contribute to the sorting of heterogeneous cell types. PB-cadherins may have a role in the morphological organization of pituitary gland and brain tissues. The protein is Cadherin-22 (CDH22) of Homo sapiens (Human).